Here is a 398-residue protein sequence, read N- to C-terminus: Argininosuccinate synthase (398 aa).

8-16 (AYSGGLDTS) is an ATP binding site. Residue Tyr87 participates in L-citrulline binding. Gly117 contributes to the ATP binding site. Residues Thr119, Asn123, and Asp124 each contribute to the L-aspartate site. Asn123 serves as a coordination point for L-citrulline. L-citrulline is bound by residues Arg127, Ser175, Glu260, and Tyr272.

The protein belongs to the argininosuccinate synthase family. Type 1 subfamily. As to quaternary structure, homotetramer.

It localises to the cytoplasm. It catalyses the reaction L-citrulline + L-aspartate + ATP = 2-(N(omega)-L-arginino)succinate + AMP + diphosphate + H(+). The protein operates within amino-acid biosynthesis; L-arginine biosynthesis; L-arginine from L-ornithine and carbamoyl phosphate: step 2/3. The polypeptide is Argininosuccinate synthase (Mycobacterium tuberculosis (strain ATCC 25618 / H37Rv)).